The chain runs to 131 residues: Glycine cleavage system H protein (131 aa).

The 83-residue stretch at Thr24–Glu106 folds into the Lipoyl-binding domain. N6-lipoyllysine is present on Lys65.

The protein belongs to the GcvH family. As to quaternary structure, the glycine cleavage system is composed of four proteins: P, T, L and H. Requires (R)-lipoate as cofactor.

The glycine cleavage system catalyzes the degradation of glycine. The H protein shuttles the methylamine group of glycine from the P protein to the T protein. This is Glycine cleavage system H protein from Mycobacteroides abscessus (strain ATCC 19977 / DSM 44196 / CCUG 20993 / CIP 104536 / JCM 13569 / NCTC 13031 / TMC 1543 / L948) (Mycobacterium abscessus).